The following is a 244-amino-acid chain: Uridylate kinase (244 aa).

12-15 provides a ligand contact to ATP; it reads KLSG. The involved in allosteric activation by GTP stretch occupies residues 20–25; that stretch reads GERGVG. G54 serves as a coordination point for UMP. G55 and R59 together coordinate ATP. UMP is bound by residues D74 and 135-142; that span reads IGSPYFST. N163, Y169, and D172 together coordinate ATP.

Belongs to the UMP kinase family. Homohexamer.

The protein resides in the cytoplasm. It catalyses the reaction UMP + ATP = UDP + ADP. The protein operates within pyrimidine metabolism; CTP biosynthesis via de novo pathway; UDP from UMP (UMPK route): step 1/1. Allosterically activated by GTP. Inhibited by UTP. Functionally, catalyzes the reversible phosphorylation of UMP to UDP. The protein is Uridylate kinase of Streptococcus suis (strain 98HAH33).